A 267-amino-acid polypeptide reads, in one-letter code: Hydroxyethylthiazole kinase (267 aa).

Substrate is bound at residue methionine 44. ATP contacts are provided by lysine 120 and threonine 166. Glycine 193 is a binding site for substrate.

Belongs to the Thz kinase family. It depends on Mg(2+) as a cofactor.

The catalysed reaction is 5-(2-hydroxyethyl)-4-methylthiazole + ATP = 4-methyl-5-(2-phosphooxyethyl)-thiazole + ADP + H(+). Its pathway is cofactor biosynthesis; thiamine diphosphate biosynthesis; 4-methyl-5-(2-phosphoethyl)-thiazole from 5-(2-hydroxyethyl)-4-methylthiazole: step 1/1. Its function is as follows. Catalyzes the phosphorylation of the hydroxyl group of 4-methyl-5-beta-hydroxyethylthiazole (THZ). This is Hydroxyethylthiazole kinase from Desulfitobacterium hafniense (strain DSM 10664 / DCB-2).